A 97-amino-acid chain; its full sequence is Aspartyl/glutamyl-tRNA(Asn/Gln) amidotransferase subunit C (97 aa).

The protein belongs to the GatC family. As to quaternary structure, heterotrimer of A, B and C subunits.

The catalysed reaction is L-glutamyl-tRNA(Gln) + L-glutamine + ATP + H2O = L-glutaminyl-tRNA(Gln) + L-glutamate + ADP + phosphate + H(+). It carries out the reaction L-aspartyl-tRNA(Asn) + L-glutamine + ATP + H2O = L-asparaginyl-tRNA(Asn) + L-glutamate + ADP + phosphate + 2 H(+). Allows the formation of correctly charged Asn-tRNA(Asn) or Gln-tRNA(Gln) through the transamidation of misacylated Asp-tRNA(Asn) or Glu-tRNA(Gln) in organisms which lack either or both of asparaginyl-tRNA or glutaminyl-tRNA synthetases. The reaction takes place in the presence of glutamine and ATP through an activated phospho-Asp-tRNA(Asn) or phospho-Glu-tRNA(Gln). The polypeptide is Aspartyl/glutamyl-tRNA(Asn/Gln) amidotransferase subunit C (Listeria monocytogenes serotype 4b (strain CLIP80459)).